We begin with the raw amino-acid sequence, 375 residues long: Formate dehydrogenase (375 aa).

Ile94 and Asn120 together coordinate substrate. NAD(+)-binding positions include 175 to 176, Asp196, 231 to 235, Thr257, Asp283, 312 to 315, and Ser358; these read RI, PLHEK, and HMSG.

Belongs to the D-isomer specific 2-hydroxyacid dehydrogenase family. FDH subfamily. As to quaternary structure, homodimer.

The protein resides in the cytoplasm. It carries out the reaction formate + NAD(+) = CO2 + NADH. Its function is as follows. Catalyzes the NAD(+)-dependent oxidation of formate to carbon dioxide. Formate oxidation is the final step in the methanol oxidation pathway in methylotrophic microorganisms. Has a role in the detoxification of exogenous formate in non-methylotrophic organisms. This is Formate dehydrogenase from Neurospora crassa (strain ATCC 24698 / 74-OR23-1A / CBS 708.71 / DSM 1257 / FGSC 987).